Here is a 295-residue protein sequence, read N- to C-terminus: Deleted in azoospermia-like (295 aa).

The span at 1 to 10 (MSAANPETPN) shows a compositional bias: polar residues. Residues 1–25 (MSAANPETPNSTISREASTQSSSAA) are disordered. Over residues 11–25 (STISREASTQSSSAA) the composition is skewed to low complexity. Positions 40-115 (NTVFVGGIDV…KKLKLGPAIR (76 aa)) constitute an RRM domain. Residues 80 to 132 (KGYGFVSFFNDVDVQKIVESQINFHGKKLKLGPAIRKQNLCAYHVQPRPLVFN) form a homodimerization region. A DAZ domain is found at 167-190 (AYPTYPNSPVQVITGYQLPVYNYQ). Phosphotyrosine is present on Tyr-276.

This sequence belongs to the RRM DAZ family. In terms of assembly, homodimer and heterodimer. Forms a heterodimer with DAZ. Interacts with BOLL, DAZAP1 and DAZAP2. Interacts with PUM2 Multiple DAZL RRMs can bind to a single RNA containing multiple GUU triplets. As to expression, testis specific.

Its subcellular location is the cytoplasm. It is found in the nucleus. Functionally, RNA-binding protein, which is essential for gametogenesis in both males and females. Plays a central role during spermatogenesis. Acts by binding to the 3'-UTR of mRNA, specifically recognizing GUU triplets, and thereby regulating the translation of key transcripts. The chain is Deleted in azoospermia-like (DAZL) from Macaca fascicularis (Crab-eating macaque).